The chain runs to 525 residues: GMP synthase [glutamine-hydrolyzing] (525 aa).

In terms of domain architecture, Glutamine amidotransferase type-1 spans 8-207; the sequence is KILILDFGSQ…ALDICQCDAN (200 aa). The active-site Nucleophile is the cysteine 85. Catalysis depends on residues histidine 181 and glutamate 183. Positions 208-400 constitute a GMPS ATP-PPase domain; that stretch reads WKPASIIEDA…LGLPYDMLYR (193 aa). 235–241 serves as a coordination point for ATP; sequence SGGVDSS.

In terms of assembly, homodimer.

The enzyme catalyses XMP + L-glutamine + ATP + H2O = GMP + L-glutamate + AMP + diphosphate + 2 H(+). The protein operates within purine metabolism; GMP biosynthesis; GMP from XMP (L-Gln route): step 1/1. In terms of biological role, catalyzes the synthesis of GMP from XMP. This chain is GMP synthase [glutamine-hydrolyzing], found in Shewanella woodyi (strain ATCC 51908 / MS32).